Consider the following 241-residue polypeptide: Putative ABC transporter ATP-binding protein CA_C0773 (241 aa).

The ABC transporter domain maps to 2-241; that stretch reads IKLEKVSFTY…REFLMECNII (240 aa). 34-41 contributes to the ATP binding site; it reads GPNGSGKS.

This sequence belongs to the ABC transporter superfamily.

Its subcellular location is the cell membrane. Its function is as follows. Probably part of an ABC transporter complex. Responsible for energy coupling to the transport system. The protein is Putative ABC transporter ATP-binding protein CA_C0773 of Clostridium acetobutylicum (strain ATCC 824 / DSM 792 / JCM 1419 / IAM 19013 / LMG 5710 / NBRC 13948 / NRRL B-527 / VKM B-1787 / 2291 / W).